The following is a 440-amino-acid chain: Polycomb group protein VERNALIZATION 2 (440 aa).

The C2H2-type zinc-finger motif lies at 86–111 (EDCSCPFCSMLCGSFKGLQFHLNSSH). A Nuclear localization signal motif is present at residues 156 to 163 (KPRKRRQR). The tract at residues 267 to 345 (RQFYHSHRVQ…GHISWACEVF (79 aa)) is VEFS-box. The tract at residues 398 to 440 (NNNNNSVDHPSDSNTNNNNIVDHPNDIKNKNNVDNKDNNSRDK) is disordered. Over residues 420 to 440 (HPNDIKNKNNVDNKDNNSRDK) the composition is skewed to basic and acidic residues.

The protein belongs to the VEFS (VRN2-EMF2-FIS2-SU(Z)12) family. Probable component of a PcG complex. In plants, PcG complexes are probably composed of a member of the EZ family (CLF or MEA), FIE, and a member of the VEFS family (FIS2, VRN2 or EMF2). Component of the plant homeodomain / polycomb repressive complex 2 (PHD-PRC2) large complex during prolonged cold, composed of core PRC2 components (VRN2, EZA1, FIE and MSI1), and three related PHD finger proteins (VIL1, VIL2 and VIN3) that mediates histone H3 trimethylation on 'Lys-27' (H3K27me3). Binds to ALP1. In terms of tissue distribution, weakly expressed. Expressed both during, and in the absence of vernalization.

Its subcellular location is the nucleus. In terms of biological role, polycomb group (PcG) protein. Plays a central role in vernalization by maintaining repressed the homeotic gene FLC, a floral repressor, after a cold treatment. PcG proteins act by forming multiprotein complexes, which are required to maintain the transcriptionally repressive state of homeotic genes throughout development. PcG proteins are not required to initiate repression, but to maintain it during later stages of development. They probably act via the methylation of histones, rendering chromatin heritably changed in its expressibility. Associates constitutively along the whole FLC locus. This is Polycomb group protein VERNALIZATION 2 (VRN2) from Arabidopsis thaliana (Mouse-ear cress).